The chain runs to 394 residues: MTTTPTTTTHMVLITTIHMVLTTMIHMALTTMIHMAPTTMIHMALTTMIPTVLPTRRRALMVLTMTIRTAPATTMTLTVPTTMTLTVPTTMTLTVPTMTTLTVRQTRIRALTVPTMTILMALTMMIHMVLPTRRRVLMVPATTIRMVLTTMIHMVLTTMIHMALTTMIPTVLPTRRRALMVLTMTIRTAPATTMTLTVPTMTTLTVRQTRIRALTVLLATMILTDLPITTTLTVLPTRRRVLMVPTMTILMALTMMIHMVLPTRRRVLMVPATTIRMVLTTMIPTVLLTKRRVLMVPTTMIHTAPATTMTLTVPTMTTLTVPLIETRTPMGLPTTVHPTMMTLMVHLIEAVVINTVVTTITKFLDVFDKKNILLCLDLSMKILCMSCGYVSAGK.

Transmembrane regions (helical) follow at residues 13 to 33 (LITT…TTMI), 35 to 55 (MAPT…VLPT), 73 to 95 (TTMT…TLTV), 110 to 130 (ALTV…HMVL), 152 to 172 (IHMV…PTVL), 179 to 198 (LMVL…TLTV), 216 to 236 (VLLA…TVLP), 241 to 261 (VLMV…HMVL), 267 to 287 (VLMV…PTVL), 293 to 313 (VLMV…TLTV), 340 to 360 (MMTL…VTTI), and 372 to 392 (ILLC…YVSA).

It is found in the membrane. This is an uncharacterized protein from Saccharomyces cerevisiae (strain ATCC 204508 / S288c) (Baker's yeast).